The following is a 144-amino-acid chain: Large ribosomal subunit protein uL16 (144 aa).

Over residues 1–16 the composition is skewed to basic residues; that stretch reads MLVPKRVKHRKVQRGK. A disordered region spans residues 1–20; that stretch reads MLVPKRVKHRKVQRGKMRGE.

The protein belongs to the universal ribosomal protein uL16 family. Part of the 50S ribosomal subunit.

Functionally, binds 23S rRNA and is also seen to make contacts with the A and possibly P site tRNAs. The polypeptide is Large ribosomal subunit protein uL16 (Limosilactobacillus fermentum (strain NBRC 3956 / LMG 18251) (Lactobacillus fermentum)).